A 150-amino-acid chain; its full sequence is Aspartate 1-decarboxylase 2 (150 aa).

Ser24 functions as the Schiff-base intermediate with substrate; via pyruvic acid in the catalytic mechanism. Ser24 is modified (pyruvic acid (Ser)). Thr56 contributes to the substrate binding site. Tyr57 acts as the Proton donor in catalysis. 72–74 (GAA) provides a ligand contact to substrate.

It belongs to the PanD family. Heterooctamer of four alpha and four beta subunits. It depends on pyruvate as a cofactor. In terms of processing, is synthesized initially as an inactive proenzyme, which is activated by self-cleavage at a specific serine bond to produce a beta-subunit with a hydroxyl group at its C-terminus and an alpha-subunit with a pyruvoyl group at its N-terminus.

The protein localises to the cytoplasm. It catalyses the reaction L-aspartate + H(+) = beta-alanine + CO2. It functions in the pathway cofactor biosynthesis; (R)-pantothenate biosynthesis; beta-alanine from L-aspartate: step 1/1. In terms of biological role, catalyzes the pyruvoyl-dependent decarboxylation of aspartate to produce beta-alanine. This Mesorhizobium japonicum (strain LMG 29417 / CECT 9101 / MAFF 303099) (Mesorhizobium loti (strain MAFF 303099)) protein is Aspartate 1-decarboxylase 2.